Here is a 380-residue protein sequence, read N- to C-terminus: Cytochrome b (380 aa).

The next 4 helical transmembrane spans lie at 33 to 53, 77 to 98, 113 to 133, and 178 to 198; these read FGSL…FLAM, WLIR…FIHV, WNIG…GYVL, and FFAF…VHLL. Heme b-binding residues include His-83 and His-97. The heme b site is built by His-182 and His-196. An a ubiquinone-binding site is contributed by His-201. The next 4 helical transmembrane spans lie at 226–246, 288–308, 320–340, and 347–367; these read IKDL…VLFF, LGGV…PLLN, LTQF…WIGG, and FTTI…VLMP.

It belongs to the cytochrome b family. In terms of assembly, the cytochrome bc1 complex contains 11 subunits: 3 respiratory subunits (MT-CYB, CYC1 and UQCRFS1), 2 core proteins (UQCRC1 and UQCRC2) and 6 low-molecular weight proteins (UQCRH/QCR6, UQCRB/QCR7, UQCRQ/QCR8, UQCR10/QCR9, UQCR11/QCR10 and a cleavage product of UQCRFS1). This cytochrome bc1 complex then forms a dimer. Heme b serves as cofactor.

The protein resides in the mitochondrion inner membrane. Its function is as follows. Component of the ubiquinol-cytochrome c reductase complex (complex III or cytochrome b-c1 complex) that is part of the mitochondrial respiratory chain. The b-c1 complex mediates electron transfer from ubiquinol to cytochrome c. Contributes to the generation of a proton gradient across the mitochondrial membrane that is then used for ATP synthesis. The protein is Cytochrome b (MT-CYB) of Thomasomys notatus (Distinguished oldfield mouse).